A 362-amino-acid polypeptide reads, in one-letter code: G-protein coupled receptor 6 (362 aa).

Topologically, residues 1–74 are extracellular; that stretch reads MNASAASLND…PGLLLPAVNP (74 aa). Asn-2, Asn-9, and Asn-51 each carry an N-linked (GlcNAc...) asparagine glycan. Residues 75 to 94 traverse the membrane as a helical segment; the sequence is WDVLLCVSGTVIAGENALVV. Residues 95–106 lie on the Cytoplasmic side of the membrane; that stretch reads ALIASTPALRTP. Residues 107 to 130 traverse the membrane as a helical segment; sequence MFVLVGSLATADLLAGCGLILHFV. At 131–142 the chain is on the extracellular side; sequence FQYLVPSETVSL. A helical transmembrane segment spans residues 143–164; the sequence is LTVGFLVASFAASVSSLLAITV. The Cytoplasmic portion of the chain corresponds to 165–185; the sequence is DRYLSLYNALTYYSRRTLLGV. A helical membrane pass occupies residues 186 to 205; that stretch reads HLLLAATWTVSLGLGLLPVL. Topologically, residues 206–230 are extracellular; the sequence is GWNCLAERAACSVVRPLARSHVALL. The chain crosses the membrane as a helical span at residues 231–249; that stretch reads SAAFFMVFGIMLHLYVRIC. Residues 250–277 lie on the Cytoplasmic side of the membrane; sequence QVVWRHAHQIALQQHCLAPPHLAATRKG. The helical transmembrane segment at 278–304 threads the bilayer; sequence VGTLAVVLGTFGASWLPFAIYCVVGSH. Residues 305-309 lie on the Extracellular side of the membrane; it reads EDPAV. Residues 310 to 331 form a helical membrane-spanning segment; it reads YTYATLLPATYNSMINPIIYAF. Residues 332 to 362 are Cytoplasmic-facing; sequence RNQEIQRALWLLLCGCFQSKVPFRSRSPSEV. Cys-345 is lipidated: S-palmitoyl cysteine. 3 positions are modified to phosphoserine: Ser-356, Ser-358, and Ser-360.

The protein belongs to the G-protein coupled receptor 1 family.

It localises to the cell membrane. Functionally, orphan receptor with constitutive G(s) signaling activity that activate cyclic AMP. Promotes neurite outgrowth and blocks myelin inhibition in neurons. The polypeptide is G-protein coupled receptor 6 (GPR6) (Homo sapiens (Human)).